A 446-amino-acid polypeptide reads, in one-letter code: Phosphoglucosamine mutase (446 aa).

Ser-103 acts as the Phosphoserine intermediate in catalysis. Mg(2+) contacts are provided by Ser-103, Asp-242, Asp-244, and Asp-246. A Phosphoserine modification is found at Ser-103.

The protein belongs to the phosphohexose mutase family. The cofactor is Mg(2+). Activated by phosphorylation.

The enzyme catalyses alpha-D-glucosamine 1-phosphate = D-glucosamine 6-phosphate. Its function is as follows. Catalyzes the conversion of glucosamine-6-phosphate to glucosamine-1-phosphate. In Vibrio cholerae serotype O1 (strain ATCC 39541 / Classical Ogawa 395 / O395), this protein is Phosphoglucosamine mutase.